The following is a 1165-amino-acid chain: Vacuolar segregation protein 7 (1165 aa).

Topologically, residues 1–919 are cytoplasmic; that stretch reads MTEEDRKLTV…RKSPFVKVKN (919 aa). A disordered region spans residues 118–147; the sequence is SVSSTNNNSNNALINHNPLSSHLSNPSSSL. Ser-164 bears the Phosphoserine mark. 4 disordered regions span residues 215-241, 274-423, 461-497, and 560-668; these read SNNTAPSTSNNIGSNTPPAPLLPLPSL, KAKN…SEKP, LIFPDSSSQQQQQQQQPPKQQQQQQNHGITSKISAPL, and EPPH…KRPL. A compositionally biased stretch (polar residues) spans 216-230; it reads NNTAPSTSNNIGSNT. Low complexity predominate over residues 334–345; sequence TTSTKTAPSTAP. Over residues 346 to 367 the composition is skewed to polar residues; the sequence is LGSTDNTQALTASVSSSNADNH. A compositionally biased stretch (low complexity) spans 375 to 391; sequence SSNNNGNNSNSASNKTN. Over residues 393 to 412 the composition is skewed to polar residues; it reads DIKNSNADLSASTSNNNAIN. Residues 413-423 show a composition bias toward basic and acidic residues; that stretch reads DDSHESNSEKP. 2 stretches are compositionally biased toward low complexity: residues 469–485 and 562–571; these read QQQQQQQQPPKQQQQQQ and PHQLQQQQPP. Residues 576–587 are compositionally biased toward polar residues; that stretch reads SVDSYTSDNPDS. Low complexity predominate over residues 599–613; the sequence is SLVSLSKVSPHLLSS. A compositionally biased stretch (polar residues) spans 614-662; it reads TSSNGNTISCPNVATNSQELEPNNDISTKKSLSNSTLRHSSANRNSNYG. A helical; Signal-anchor for type II membrane protein transmembrane segment spans residues 920–940; it reads FLYLAFVISSLLMTGFILGFL. Over 941-1165 the chain is Vacuolar; it reads LATNKELQDV…KDSMVHPGKK (225 aa). N-linked (GlcNAc...) asparagine glycans are attached at residues Asn-1020 and Asn-1099. A disordered region spans residues 1074–1121; the sequence is SPGSREAKHENDDDDDDDGDDGDDENNTNERQYKSKPNARDDKEDDTK. Positions 1085–1100 are enriched in acidic residues; sequence DDDDDDDGDDGDDENN. The segment covering 1111–1121 has biased composition (basic and acidic residues); it reads NARDDKEDDTK.

Component of the PI(3,5)P2 regulatory complex, composed of ATG18, FIG4, FAB1, VAC14 and VAC7. VAC14 nucleates the assembly of the complex and serves as a scaffold. In terms of processing, N-glycosylated.

The protein resides in the vacuole membrane. Functionally, the PI(3,5)P2 regulatory complex regulates both the synthesis and turnover of phosphatidylinositol 3,5-bisphosphate (PtdIns(3,5)P2). Positively regulates FAB1 kinase activity. Major activator of FAB1 during hyperosmotic shock and can elevate levels of PtdIns(3,5)P2 in the absence of VAC14 and FIG4. Directly involved in vacuolar membrane scission. Required for normal vacuole acidification, inheritance and morphology. The polypeptide is Vacuolar segregation protein 7 (VAC7) (Saccharomyces cerevisiae (strain ATCC 204508 / S288c) (Baker's yeast)).